A 132-amino-acid polypeptide reads, in one-letter code: Protein NrdI (132 aa).

It belongs to the NrdI family.

In terms of biological role, probably involved in ribonucleotide reductase function. The protein is Protein NrdI of Staphylococcus haemolyticus (strain JCSC1435).